The following is a 287-amino-acid chain: Large ribosomal subunit protein uL2 (287 aa).

Positions 220-287 (VRGSVMNPCD…SKRSRGGRDS (68 aa)) are disordered. The span at 271–287 (VRRRRRISKRSRGGRDS) shows a compositional bias: basic residues.

Belongs to the universal ribosomal protein uL2 family. In terms of assembly, part of the 50S ribosomal subunit. Forms a bridge to the 30S subunit in the 70S ribosome.

One of the primary rRNA binding proteins. Required for association of the 30S and 50S subunits to form the 70S ribosome, for tRNA binding and peptide bond formation. It has been suggested to have peptidyltransferase activity; this is somewhat controversial. Makes several contacts with the 16S rRNA in the 70S ribosome. The sequence is that of Large ribosomal subunit protein uL2 from Prochlorococcus marinus (strain MIT 9515).